The primary structure comprises 527 residues: Catalase (527 aa).

Residues M1 to Q22 show a composition bias toward basic and acidic residues. The tract at residues M1–G32 is disordered. N-acetylalanine is present on A2. At S9 the chain carries Phosphoserine. N6-succinyllysine is present on K13. Catalysis depends on residues H75 and N148. 4 residues coordinate NADP(+): H194, S201, R203, and N213. K221 carries the post-translational modification N6-succinyllysine. At K233 the chain carries N6-acetyllysine. Positions 237, 303, and 305 each coordinate NADP(+). Y358 provides a ligand contact to heme. Residues S417 and S434 each carry the phosphoserine modification. K480 is subject to N6-acetyllysine; alternate. An N6-succinyllysine; alternate modification is found at K480. K499 is subject to N6-acetyllysine. The residue at position 511 (T511) is a Phosphothreonine. S517 is subject to Phosphoserine. The Microbody targeting signal; atypical signature appears at K524–L527.

This sequence belongs to the catalase family. Homotetramer. Interacts (via microbody targeting signal) with PEX5, monomeric form interacts with PEX5, leading to its translocation into peroxisomes. The cofactor is heme. Requires NADP(+) as cofactor.

It is found in the peroxisome matrix. It carries out the reaction 2 H2O2 = O2 + 2 H2O. Catalyzes the degradation of hydrogen peroxide (H(2)O(2)) generated by peroxisomal oxidases to water and oxygen, thereby protecting cells from the toxic effects of hydrogen peroxide. Promotes growth of cells including T-cells, B-cells, myeloid leukemia cells, melanoma cells, mastocytoma cells and normal and transformed fibroblast cells. The sequence is that of Catalase (CAT) from Sus scrofa (Pig).